The following is a 347-amino-acid chain: NADH-ubiquinone oxidoreductase chain 2 (347 aa).

A run of 10 helical transmembrane segments spans residues P3–S23, H25–M45, Y59–A79, L96–P116, G127–P147, N150–L170, I193–I213, I240–F260, S274–M294, and I323–L343.

Belongs to the complex I subunit 2 family. Core subunit of respiratory chain NADH dehydrogenase (Complex I) which is composed of 45 different subunits. Interacts with TMEM242.

Its subcellular location is the mitochondrion inner membrane. It carries out the reaction a ubiquinone + NADH + 5 H(+)(in) = a ubiquinol + NAD(+) + 4 H(+)(out). Functionally, core subunit of the mitochondrial membrane respiratory chain NADH dehydrogenase (Complex I) which catalyzes electron transfer from NADH through the respiratory chain, using ubiquinone as an electron acceptor. Essential for the catalytic activity and assembly of complex I. This chain is NADH-ubiquinone oxidoreductase chain 2, found in Lemur catta (Ring-tailed lemur).